A 164-amino-acid chain; its full sequence is V-type proton ATPase 16 kDa proteolipid subunit (164 aa).

Residues 1–9 (MASFSGDET) are Lumenal-facing. The helical transmembrane segment at 10 to 32 (APFFGFLGAAAALVFSCMGAAYG) threads the bilayer. Residues 33-54 (TAKSGVGVASMGVMRPELVMKS) lie on the Cytoplasmic side of the membrane. The helical transmembrane segment at 55-75 (IVPVVMAGVLGIYGLIIAVII) threads the bilayer. The Lumenal segment spans residues 76 to 94 (STGINPKAKSYYLFDGYAH). A helical membrane pass occupies residues 95-116 (LSSGLACGLAGLSAGMAIGIVG). At 117-128 (DAGVRANAQQPK) the chain is on the cytoplasmic side. Residues 129–154 (LFVGMILILIFAEALALYGLIVGIIL) traverse the membrane as a helical segment. Over 155 to 164 (SSRAGQSRAD) the chain is Lumenal.

This sequence belongs to the V-ATPase proteolipid subunit family. As to quaternary structure, V-ATPase is a heteromultimeric enzyme composed of a peripheral catalytic V1 complex (main components: subunits A, B, C, D, E, and F) attached to an integral membrane V0 proton pore complex (main component: the proteolipid protein; which is present as a hexamer that forms the proton-conducting pore).

Its subcellular location is the vacuole membrane. Functionally, proton-conducting pore forming subunit of the membrane integral V0 complex of vacuolar ATPase. V-ATPase is responsible for acidifying a variety of intracellular compartments in eukaryotic cells. In Vigna radiata var. radiata (Mung bean), this protein is V-type proton ATPase 16 kDa proteolipid subunit.